Consider the following 406-residue polypeptide: Fosmidomycin resistance protein (406 aa).

At 1–42 (MAMSEQPQPVAGAAASTTKARTSFGILGAISLSHLLNDMIQS) the chain is on the periplasmic side. A run of 2 helical transmembrane segments spans residues 43-63 (LILA…MQIG) and 64-84 (MITL…GYWT). Residues 85–102 (DKYPMPWSLPIGMCFTLS) lie on the Periplasmic side of the membrane. The helical transmembrane segment at 103–123 (GLVLLALAGSFGAVLLAAALV) threads the bilayer. The Cytoplasmic segment spans residues 124–151 (GTGSSVFHPESSRVARMASGGRHGLAQS). The helical transmembrane segment at 152–172 (IFQVGGNFGSSLGPLLAAVII) threads the bilayer. Topologically, residues 173–177 (APYGK) are periplasmic. A helical transmembrane segment spans residues 178-198 (GNVAWFVLAALLAIVVLAQIS). Topologically, residues 199-225 (RWYSAQHRMNKGKPKATIINPLPRNKV) are cytoplasmic. The helical transmembrane segment at 226–246 (VLAVSILLILIFSKYFYMASI) threads the bilayer. Residues 247–266 (SSYYTFYLMQKFGLSIQNAQ) lie on the Periplasmic side of the membrane. The helical transmembrane segment at 267–287 (LHLFAFLFAVAAGTVIGGPVG) threads the bilayer. The Cytoplasmic segment spans residues 288–294 (DKIGRKY). The chain crosses the membrane as a helical span at residues 295-315 (VIWGSILGVAPFTLILPYASL). The Periplasmic segment spans residues 316-319 (HWTG). The helical transmembrane segment at 320 to 340 (VLTVIIGFILASAFSAILVYA) threads the bilayer. Residues 341-353 (QELLPGRIGMVSG) are Cytoplasmic-facing. The helical transmembrane segment at 354-374 (LFFGFAFGMGGLGAAVLGLIA) threads the bilayer. The Periplasmic segment spans residues 375–378 (DHTS). A helical transmembrane segment spans residues 379–399 (IELVYKICAFLPLLGMLTIFL). The Cytoplasmic segment spans residues 400-406 (PDNRHKD).

It belongs to the major facilitator superfamily.

It localises to the cell inner membrane. In terms of biological role, confers the resistance against fosmidomycin. In Escherichia coli (strain K12), this protein is Fosmidomycin resistance protein (fsr).